The chain runs to 240 residues: Enolase-phosphatase E1 (240 aa).

The Mg(2+) site is built by Asp-9 and Glu-11. Residues 129–130 (SS) and Lys-168 each bind substrate. Asp-195 serves as a coordination point for Mg(2+).

Belongs to the HAD-like hydrolase superfamily. MasA/MtnC family. Monomer. It depends on Mg(2+) as a cofactor.

It localises to the cytoplasm. It is found in the nucleus. It catalyses the reaction 5-methylsulfanyl-2,3-dioxopentyl phosphate + H2O = 1,2-dihydroxy-5-(methylsulfanyl)pent-1-en-3-one + phosphate. The protein operates within amino-acid biosynthesis; L-methionine biosynthesis via salvage pathway; L-methionine from S-methyl-5-thio-alpha-D-ribose 1-phosphate: step 3/6. It functions in the pathway amino-acid biosynthesis; L-methionine biosynthesis via salvage pathway; L-methionine from S-methyl-5-thio-alpha-D-ribose 1-phosphate: step 4/6. In terms of biological role, bifunctional enzyme that catalyzes the enolization of 2,3-diketo-5-methylthiopentyl-1-phosphate (DK-MTP-1-P) into the intermediate 2-hydroxy-3-keto-5-methylthiopentenyl-1-phosphate (HK-MTPenyl-1-P), which is then dephosphorylated to form the acireductone 1,2-dihydroxy-3-keto-5-methylthiopentene (DHK-MTPene). This Candida tropicalis (strain ATCC MYA-3404 / T1) (Yeast) protein is Enolase-phosphatase E1.